Consider the following 396-residue polypeptide: Transcription factor IIIB 50 kDa subunit (396 aa).

The segment at 3–36 (GAKRCPDCGSSEIVEDAHYSQDQLVCADCGCILS) adopts a TFIIB-type zinc-finger fold. Cysteine 7, cysteine 10, cysteine 28, and cysteine 31 together coordinate Zn(2+). Copy 2 of the repeat occupies 173 to 249 (VKSHCRSFKL…SRRLSCSLSR (77 aa)). Cysteine 342 bears the Cysteine sulfenic acid (-SOH) mark.

This sequence belongs to the TFIIB family. Component of TFIIIB complexes. Interacts with TBP and forms a ternary complex with TBp and target DNA sequences. Post-translationally, in response to oxidative stress, a Cys-residue is reversibly oxidized to cysteine sulfenic acid. This impairs formation of a ternary complex with TBP and DNA and down-regulates expression of target genes in response to oxidative stress.

It localises to the nucleus. Functionally, general activator of RNA polymerase III transcription. Factor exclusively required for RNA polymerase III transcription of genes with promoter elements upstream of the initiation sites. Contributes to the regulation of gene expression; functions as activator in the absence of oxidative stress. Down-regulates expression of target genes in response to oxidative stress. Overexpression protects cells against apoptosis in response to oxidative stress. This is Transcription factor IIIB 50 kDa subunit (brf2) from Xenopus laevis (African clawed frog).